Here is a 120-residue protein sequence, read N- to C-terminus: Aspartate 1-decarboxylase (120 aa).

Serine 25 serves as the catalytic Schiff-base intermediate with substrate; via pyruvic acid. Serine 25 bears the Pyruvic acid (Ser) mark. Residue threonine 57 coordinates substrate. Tyrosine 58 functions as the Proton donor in the catalytic mechanism. Position 72-74 (72-74 (GAA)) interacts with substrate.

This sequence belongs to the PanD family. Heterooctamer of four alpha and four beta subunits. Pyruvate is required as a cofactor. Post-translationally, is synthesized initially as an inactive proenzyme, which is activated by self-cleavage at a specific serine bond to produce a beta-subunit with a hydroxyl group at its C-terminus and an alpha-subunit with a pyruvoyl group at its N-terminus.

Its subcellular location is the cytoplasm. The enzyme catalyses L-aspartate + H(+) = beta-alanine + CO2. It participates in cofactor biosynthesis; (R)-pantothenate biosynthesis; beta-alanine from L-aspartate: step 1/1. In terms of biological role, catalyzes the pyruvoyl-dependent decarboxylation of aspartate to produce beta-alanine. This chain is Aspartate 1-decarboxylase, found in Helicobacter hepaticus (strain ATCC 51449 / 3B1).